The following is a 504-amino-acid chain: 2,3-bisphosphoglycerate-independent phosphoglycerate mutase (504 aa).

Mn(2+) is bound by residues aspartate 9 and serine 59. Catalysis depends on serine 59, which acts as the Phosphoserine intermediate. Residues histidine 120, 149 to 150, arginine 181, arginine 187, 253 to 256, and lysine 326 contribute to the substrate site; these read RD and RPDR. Positions 393, 397, 434, 435, and 451 each coordinate Mn(2+).

It belongs to the BPG-independent phosphoglycerate mutase family. Mn(2+) serves as cofactor.

The enzyme catalyses (2R)-2-phosphoglycerate = (2R)-3-phosphoglycerate. The protein operates within carbohydrate degradation; glycolysis; pyruvate from D-glyceraldehyde 3-phosphate: step 3/5. Its function is as follows. Catalyzes the interconversion of 2-phosphoglycerate and 3-phosphoglycerate. This is 2,3-bisphosphoglycerate-independent phosphoglycerate mutase from Haloquadratum walsbyi (strain DSM 16790 / HBSQ001).